A 104-amino-acid chain; its full sequence is Pyrimidine/purine nucleoside phosphorylase (104 aa).

The protein belongs to the nucleoside phosphorylase PpnP family.

The enzyme catalyses a purine D-ribonucleoside + phosphate = a purine nucleobase + alpha-D-ribose 1-phosphate. It catalyses the reaction adenosine + phosphate = alpha-D-ribose 1-phosphate + adenine. The catalysed reaction is cytidine + phosphate = cytosine + alpha-D-ribose 1-phosphate. It carries out the reaction guanosine + phosphate = alpha-D-ribose 1-phosphate + guanine. The enzyme catalyses inosine + phosphate = alpha-D-ribose 1-phosphate + hypoxanthine. It catalyses the reaction thymidine + phosphate = 2-deoxy-alpha-D-ribose 1-phosphate + thymine. The catalysed reaction is uridine + phosphate = alpha-D-ribose 1-phosphate + uracil. It carries out the reaction xanthosine + phosphate = alpha-D-ribose 1-phosphate + xanthine. Its function is as follows. Catalyzes the phosphorolysis of diverse nucleosides, yielding D-ribose 1-phosphate and the respective free bases. Can use uridine, adenosine, guanosine, cytidine, thymidine, inosine and xanthosine as substrates. Also catalyzes the reverse reactions. The polypeptide is Pyrimidine/purine nucleoside phosphorylase (Leptothrix cholodnii (strain ATCC 51168 / LMG 8142 / SP-6) (Leptothrix discophora (strain SP-6))).